We begin with the raw amino-acid sequence, 1025 residues long: Myosin phosphatase Rho-interacting protein (1025 aa).

An interaction with F-actin region spans residues 2–383 (SAAKENPCRK…DRRSTEPSVT (382 aa)). One can recognise a PH 1 domain in the interval 43 to 150 (KPIYGGWLLL…WLEMLMVYPR (108 aa)). Disordered stretches follow at residues 152–302 (NKQN…RRSQ) and 317–383 (HMET…PSVT). A compositionally biased stretch (low complexity) spans 179 to 189 (SSSSSSSSSSS). Phosphoserine occurs at positions 192, 217, 218, 220, 224, and 226. Positions 217-236 (SSLSPAQSPSQSQPPAASSL) are enriched in low complexity. The segment covering 239-263 (PGLESKEEESAMSSDRMDCGRKVRV) has biased composition (basic and acidic residues). A phosphoserine mark is found at S265 and S269. Residues 271 to 281 (EKTKQDLKAEE) are compositionally biased toward basic and acidic residues. The span at 284 to 294 (LPPPLSPPSPS) shows a compositional bias: pro residues. Phosphoserine is present on residues S289 and S292. At T295 the chain carries Phosphothreonine. Phosphoserine is present on S326. A compositionally biased stretch (basic and acidic residues) spans 332–348 (RQGRSEKRAFPRKRDFT). T348 carries the phosphothreonine modification. A phosphoserine mark is found at S362 and S365. In terms of domain architecture, PH 2 spans 387–483 (LNFKKGWLTK…WIQTIMKHVH (97 aa)). Disordered regions lie at residues 485 to 545 (TTAP…TFDW) and 560 to 591 (VGGV…RREE). A Phosphoserine modification is found at S493. Composition is skewed to basic and acidic residues over residues 524–545 (PEQK…TFDW) and 567–589 (DTHE…ARRR). The segment at 546 to 824 (AEFRPIQQAL…SVQRELEVLS (279 aa)) is interaction with RHOA. Position 619 is a phosphoserine (S619). T646 is subject to Phosphothreonine. A phosphoserine mark is found at S663 and S800. Residues 673-977 (HELTSLLEKE…AATEALGEKS (305 aa)) are a coiled coil. The segment at 824-879 (SEQYSQKCLENAHLAQALEAERQALRQCQRENQELNAHNQELNNRLAAEITRLRTL) is interaction with PPP1R12A. Phosphoserine is present on residues S891, S977, S993, S1014, and S1016.

As to quaternary structure, binds F-actin through its N-terminus. Interacts with MYZAP. Binds RHOA, PPP1R12A/MBS and PPP1R12C/MBS85 through adjacent coiled coil domains.

The protein localises to the cytoplasm. It localises to the cytoskeleton. In terms of biological role, targets myosin phosphatase to the actin cytoskeleton. Required for the regulation of the actin cytoskeleton by RhoA and ROCK1. Depletion leads to an increased number of stress fibers in smooth muscle cells through stabilization of actin fibers by phosphorylated myosin. Overexpression of MRIP as well as its F-actin-binding region leads to disassembly of stress fibers in neuronal cells. This is Myosin phosphatase Rho-interacting protein (MPRIP) from Homo sapiens (Human).